We begin with the raw amino-acid sequence, 547 residues long: Pyochelin synthase PchD (547 aa).

The protein belongs to the ATP-dependent AMP-binding enzyme family.

It carries out the reaction salicylate + holo-[ACP] + ATP = salicyl-[ACP] + AMP + diphosphate. The protein operates within siderophore biosynthesis. It functions in the pathway antifungal biosynthesis. Its function is as follows. Involved in the biosynthesis of the siderophore pyochelin. Specifically adenylates salicylate and loads it onto the holo form of PchE via a thioester linkage to the phosphopanthetheine moiety. Is also involved in the synthesis of the antifungal antibiotic dihydroaeruginoic acid (Dha or hydroxyphenyl-thiazolinyl-carboxylate), a precursor of pyochelin. This is Pyochelin synthase PchD from Pseudomonas aeruginosa (strain UCBPP-PA14).